The primary structure comprises 512 residues: Maturase K (512 aa).

It belongs to the intron maturase 2 family. MatK subfamily.

Its subcellular location is the plastid. It localises to the chloroplast. Its function is as follows. Usually encoded in the trnK tRNA gene intron. Probably assists in splicing its own and other chloroplast group II introns. In Lemna gibba (Swollen duckweed), this protein is Maturase K.